Reading from the N-terminus, the 268-residue chain is MMAGAEAPQPQKRYYRQRAHSNPMADHTLRYPVKPEEMDWSELYPEFFAPLIQNKSHDDPKDEKEKHSGAQVEFADIGCGYGGLLVALSPLFPDTLILGLEIRVKVSDYVQDRIRALRAAPGGGFQNIACLRSNAMKHLPNFFRKGQLAKMFFLFPDPHFKRTKHKWRIISPTLLAEYAYVLRVGGLVYTVTDVPELHEWMCTHFEEHPLFERVPLEELSEDPIVEHLGSSTEEGKKVLRNGGKNFPAVFRRIQDPLLQAVTPNPTLP.

A disordered region spans residues 1 to 21; that stretch reads MMAGAEAPQPQKRYYRQRAHS. Position 21 is a phosphoserine (serine 21). Positions 78, 101, 103, 134, 135, and 154 each coordinate S-adenosyl-L-methionine. Residue aspartate 157 is part of the active site. The alphaC helix stretch occupies residues 158–166; it reads PHFKRTKHK. Positions 232 and 234 each coordinate S-adenosyl-L-methionine. Residues 232–240 form an alpha6 helix region; it reads TEEGKKVLR.

The protein belongs to the class I-like SAM-binding methyltransferase superfamily. TrmB family. In terms of assembly, catalytic component of the METTL1-WDR4 complex, composed of METTL1 and WDR4. Post-translationally, phosphorylation at Ser-21 by PKB/AKT1 inactivates its methyltransferase activity via a steric interference mechanism in the active site that locally disrupts the catalytic center. Phosphorylation at Ser-21 does not affect the interaction with WDR4.

Its subcellular location is the nucleus. The enzyme catalyses guanosine(46) in tRNA + S-adenosyl-L-methionine = N(7)-methylguanosine(46) in tRNA + S-adenosyl-L-homocysteine. The catalysed reaction is a guanosine in mRNA + S-adenosyl-L-methionine = an N(7)-methylguanosine in mRNA + S-adenosyl-L-homocysteine. It carries out the reaction a guanosine in miRNA + S-adenosyl-L-methionine = an N(7)-methylguanosine in miRNA + S-adenosyl-L-homocysteine. It functions in the pathway tRNA modification; N(7)-methylguanine-tRNA biosynthesis. In terms of biological role, catalytic component of METTL1-WDR4 methyltransferase complex that mediates the formation of N(7)-methylguanine in a subset of RNA species, such as tRNAs, mRNAs and microRNAs (miRNAs). Catalyzes the formation of N(7)-methylguanine at position 46 (m7G46) in a large subset of tRNAs that contain the 5'-RAGGU-3' motif within the variable loop. M7G46 interacts with C13-G22 in the D-loop to stabilize tRNA tertiary structure and protect tRNAs from decay. Also acts as a methyltransferase for a subset of internal N(7)-methylguanine in mRNAs. Internal N(7)-methylguanine methylation of mRNAs in response to stress promotes their relocalization to stress granules, thereby suppressing their translation. Also methylates a specific subset of miRNAs, such as let-7. N(7)-methylguanine methylation of let-7 miRNA promotes let-7 miRNA processing by disrupting an inhibitory secondary structure within the primary miRNA transcript (pri-miRNA). Acts as a regulator of embryonic stem cell self-renewal and differentiation. The polypeptide is tRNA (guanine-N(7)-)-methyltransferase (Mus musculus (Mouse)).